The sequence spans 142 residues: Transcriptional regulator MraZ (142 aa).

SpoVT-AbrB domains lie at 5–51 (SSAL…PRPE) and 77–120 (AQDV…DAAS).

The protein belongs to the MraZ family. In terms of assembly, forms oligomers.

It is found in the cytoplasm. The protein resides in the nucleoid. This is Transcriptional regulator MraZ from Bordetella bronchiseptica (strain ATCC BAA-588 / NCTC 13252 / RB50) (Alcaligenes bronchisepticus).